The chain runs to 306 residues: Homoserine O-acetyltransferase (306 aa).

The active-site Acyl-thioester intermediate is Cys-142. The substrate site is built by Lys-163 and Ser-192. The Proton acceptor role is filled by His-235. Residue Glu-237 is part of the active site. Arg-249 serves as a coordination point for substrate.

Belongs to the MetA family.

The protein resides in the cytoplasm. It carries out the reaction L-homoserine + acetyl-CoA = O-acetyl-L-homoserine + CoA. Its pathway is amino-acid biosynthesis; L-methionine biosynthesis via de novo pathway; O-acetyl-L-homoserine from L-homoserine: step 1/1. In terms of biological role, transfers an acetyl group from acetyl-CoA to L-homoserine, forming acetyl-L-homoserine. This chain is Homoserine O-acetyltransferase, found in Brucella abortus (strain S19).